The chain runs to 142 residues: Probable transport accessory protein MmpS1 (142 aa).

Helical transmembrane passes span 8–28 (FWIP…VSRL) and 81–101 (VVNA…AVVA).

It belongs to the MmpS family.

It localises to the cell membrane. The polypeptide is Probable transport accessory protein MmpS1 (mmpS1) (Mycobacterium bovis (strain ATCC BAA-935 / AF2122/97)).